The primary structure comprises 751 residues: Collagen alpha-1(XIII) chain (751 aa).

The interval 1–24 (MVAERTRKAAASGSRGPGELGAPG) is disordered. At 1–40 (MVAERTRKAAASGSRGPGELGAPGPGTVALAEQCARLPSP) the chain is on the cytoplasmic side. The segment at 1–119 (MVAERTRKAA…KMSPGCNCPP (119 aa)) is nonhelical region 1 (NC1). The span at 15-24 (RGPGELGAPG) shows a compositional bias: gly residues. The helical; Signal-anchor for type II membrane protein transmembrane segment at 41–59 (GCCGLLALALCSLALSLLA) threads the bilayer. The Extracellular portion of the chain corresponds to 60–751 (HFRTAELQAR…GLPVQGCWNK (692 aa)). 3 disordered regions span residues 108–127 (APKM…PTGR), 190–225 (PGHP…EYPH), and 265–449 (TFQG…EMVD). Residues 116-125 (NCPPGPPGPT) show a composition bias toward pro residues. The interval 120–223 (GPPGPTGRPG…KGEKGQCGEY (104 aa)) is triple-helical region 1 (COL1). Over residues 204 to 213 (PRGQPGPQGQ) the composition is skewed to low complexity. Over residues 214–225 (KGEKGQCGEYPH) the composition is skewed to basic and acidic residues. The interval 224–273 (PHREYPGGMLAALRSNPIMSLKLLPLLNSVRLAPPPVIKRRTFQGEQSQT) is nonhelical region 2 (NC2). Positions 274-445 (GIQGPPGPPG…KGAKGEPGKG (172 aa)) are triple-helical region 2 (COL2). Pro residues-rich tracts occupy residues 278–288 (PPGPPGPPGPS), 296–312 (LPGP…PGPK), and 391–402 (PGPPGLPGPPGP). Positions 403–436 (KGEAGVDGQAGPPGQQGDKGQPGAAGEQGPSGPK) are enriched in low complexity. Basic and acidic residues predominate over residues 438-447 (AKGEPGKGEM). Residues 446–467 (EMVDYNGSINEALQEIRTLALM) form a nonhelical region 3 (NC3) region. An N-linked (GlcNAc...) asparagine glycan is attached at Asn-451. Positions 466-751 (LMGPPGLPGQ…GLPVQGCWNK (286 aa)) are disordered. The tract at residues 468 to 733 (GPPGLPGQTG…KGDQGAPGLD (266 aa)) is triple-helical region 3 (COL3). Residues 470 to 484 (PGLPGQTGPPGPPGT) are compositionally biased toward pro residues. 3 stretches are compositionally biased toward basic and acidic residues: residues 499-509 (HDGDKGPRGKP), 557-568 (TGEKGEPGDEGR), and 586-596 (EKGEAGEKGDP). Residues 601 to 613 (PGPPGPEGPPGPP) show a composition bias toward pro residues. Residues 615-628 (LQGFPGPKGEAGLE) are compositionally biased toward low complexity. Over residues 630 to 643 (SKGEKGSQGEKGDR) the composition is skewed to basic and acidic residues. Residues 658–673 (PGPPGTPGPIGVPGPA) are compositionally biased toward pro residues. The span at 684 to 699 (DPGMTGPTGAAGLPGL) shows a compositional bias: low complexity. Residues 706–726 (KGNRGERGKKGSRGPKGDKGD) are compositionally biased toward basic and acidic residues. The nonhelical region 4 (NC4) stretch occupies residues 734–751 (APCPLGEDGLPVQGCWNK).

In terms of assembly, homotrimer; disulfide-linked. Nucleation of the type XIII collagen triple helix is likely to occur at the N-terminal region with triple helix formation proceeding from the N- to the C-terminus. Interacts with FN1, perlecan/HSPG2 and NID2.

The protein resides in the cell membrane. Its subcellular location is the postsynaptic cell membrane. In terms of biological role, involved in cell-matrix and cell-cell adhesion interactions that are required for normal development. May participate in the linkage between muscle fiber and basement membrane. May play a role in endochondral ossification of bone and branching morphogenesis of lung. Binds heparin. At neuromuscular junctions, may play a role in acetylcholine receptor clustering. In Mus musculus (Mouse), this protein is Collagen alpha-1(XIII) chain.